Consider the following 147-residue polypeptide: Large ribosomal subunit protein uL13 (147 aa).

The disordered stretch occupies residues 128 to 147 (DQHPHGAQQPQPFEITQVAQ).

The protein belongs to the universal ribosomal protein uL13 family. In terms of assembly, part of the 50S ribosomal subunit.

Its function is as follows. This protein is one of the early assembly proteins of the 50S ribosomal subunit, although it is not seen to bind rRNA by itself. It is important during the early stages of 50S assembly. The protein is Large ribosomal subunit protein uL13 of Streptomyces coelicolor (strain ATCC BAA-471 / A3(2) / M145).